We begin with the raw amino-acid sequence, 379 residues long: MSDQTFDAPVWHHGKALRKGYTTGSCATAAAKVAALMVMRQHLIHQVSIVTPSGVTLCLNVESPHVEGQQAVAAIRKDGGDDVDATHGMLIFARVTLNDSGEISLQGGEGIGTVTRKGIGLPTGSPAINRTPRHTIETAVREAIGPTRGAQVEIFAPEGVLRAQKTYNARLGILGGISIIGTTGIVTPMSEESWKRSLSLELEIKRAAGLERVVLVPGNHGERFVREQMGIDPQMVVTMSNFVGYMIEEAVRLGFRQIVLIGHPGKLIKIAAGIFHTHSHIADARMETLVAHLALLGAPLPLLTLVSECDTTEAAMEHIDAWGYQRLYNHLAERICQRVLEMLRFTQQPPTCDAVLFSFDNQVLGSSRPLAAIARELTC.

This sequence belongs to the CbiD family.

The catalysed reaction is Co-precorrin-5B + S-adenosyl-L-methionine = Co-precorrin-6A + S-adenosyl-L-homocysteine. The protein operates within cofactor biosynthesis; adenosylcobalamin biosynthesis; cob(II)yrinate a,c-diamide from sirohydrochlorin (anaerobic route): step 6/10. In terms of biological role, catalyzes the methylation of C-1 in cobalt-precorrin-5B to form cobalt-precorrin-6A. This Klebsiella pneumoniae subsp. pneumoniae (strain ATCC 700721 / MGH 78578) protein is Cobalt-precorrin-5B C(1)-methyltransferase.